The primary structure comprises 485 residues: Pup--protein ligase (485 aa).

E33 serves as a coordination point for Mg(2+). R76 contributes to the ATP binding site. Y78 contributes to the Mg(2+) binding site. The active-site Proton acceptor is D80. E86 serves as a coordination point for Mg(2+). The ATP site is built by T89 and W451.

The protein belongs to the Pup ligase/Pup deamidase family. Pup-conjugating enzyme subfamily.

The enzyme catalyses ATP + [prokaryotic ubiquitin-like protein]-L-glutamate + [protein]-L-lysine = ADP + phosphate + N(6)-([prokaryotic ubiquitin-like protein]-gamma-L-glutamyl)-[protein]-L-lysine.. It functions in the pathway protein degradation; proteasomal Pup-dependent pathway. It participates in protein modification; protein pupylation. In terms of biological role, catalyzes the covalent attachment of the prokaryotic ubiquitin-like protein modifier Pup to the proteasomal substrate proteins, thereby targeting them for proteasomal degradation. This tagging system is termed pupylation. The ligation reaction involves the side-chain carboxylate of the C-terminal glutamate of Pup and the side-chain amino group of a substrate lysine. The chain is Pup--protein ligase from Bifidobacterium longum subsp. infantis (strain ATCC 15697 / DSM 20088 / JCM 1222 / NCTC 11817 / S12).